The sequence spans 494 residues: Neuronal acetylcholine receptor subunit alpha-6 (494 aa).

A signal peptide spans 1–30; the sequence is MLNSRDQGNLHSGLCLWLCGFLALFKGSTG. Topologically, residues 31 to 240 are extracellular; the sequence is CESEEQLFHR…TYSFYIRRLP (210 aa). N-linked (GlcNAc...) asparagine glycans are attached at residues Asn54 and Asn171. 2 disulfides stabilise this stretch: Cys158/Cys172 and Cys222/Cys223. The next 3 membrane-spanning stretches (helical) occupy residues 241–265, 272–290, and 306–327; these read MFYT…FYLP, VTLC…LVIT, and YLLF…VLNI. Topologically, residues 328–465 are cytoplasmic; the sequence is HYRTPATHTM…WKYMAMVVDR (138 aa). The segment at 399–423 is disordered; it reads QKSSDIAPGKRRSSQQPARWVAENS. At Ser401 the chain carries Phosphoserine. The chain crosses the membrane as a helical span at residues 466–485; it reads VFLWVFIIVCVFGTVGLFLQ.

This sequence belongs to the ligand-gated ion channel (TC 1.A.9) family. Acetylcholine receptor (TC 1.A.9.1) subfamily. Alpha-6/CHRNA6 sub-subfamily. In terms of assembly, neuronal AChR is composed of two different types of subunits: alpha and non-alpha (beta). CHRNA6/alpha-6 subunit can be combined to CHRNB2/beta-2 and CHRNA4/alpha-4 to give rise to functional receptors. Interacts with LYPD6. As to expression, predominantly expressed in only a few brain areas, including dopaminergic neurons, norepirephrine neurons and cells of the visual system.

The protein resides in the synaptic cell membrane. The catalysed reaction is K(+)(in) = K(+)(out). It catalyses the reaction Na(+)(in) = Na(+)(out). It carries out the reaction Ca(2+)(in) = Ca(2+)(out). With respect to regulation, activated by a myriad of ligands such as acetylcholine, cytisine and nicotine. CHRNA6 nAChR activity is inhibited by the antagonists alpha-conotoxin MII and PIA, a small disulfide-constrained peptides from cone snails. Its function is as follows. Component of neuronal acetylcholine receptors (nAChRs) that function as pentameric, ligand-gated cation channels with high calcium permeability among other activities. nAChRs are excitatory neurotrasnmitter receptors formed by a collection of nAChR subunits known to mediate synaptic transmission in the nervous system and the neuromuscular junction. Each nAchR subunit confers differential attributes to channel properties, including activation, deactivation and desensitization kinetics, pH sensitivity, cation permeability, and binding to allosteric modulators. CHRNA6 forms pentameric channels with CHRNB2 and CHRNA4 that exhibit high sensitivity to ACh and nicotine and are predominantly expressed in only a few brain areas, including dopaminergic neurons, norepirephrine neurons and cells of the visual system. nAChrs containing CHRNA6 subunits mediate endogenous cholinergic modulation of dopamine and gamma-aminobutyric acid (GABA) release in response to nicotine at nerve terminals. This chain is Neuronal acetylcholine receptor subunit alpha-6 (Chrna6), found in Mus musculus (Mouse).